The primary structure comprises 464 residues: Fumarate hydratase class II 1 (464 aa).

Residues 96–98, 127–130, 137–139, and Thr185 each bind substrate; these read SGT, HPND, and SSN. His186 (proton donor/acceptor) is an active-site residue. Ser316 is a catalytic residue. Substrate is bound by residues Ser317 and 322–324; that span reads KVN.

The protein belongs to the class-II fumarase/aspartase family. Fumarase subfamily. In terms of assembly, homotetramer.

Its subcellular location is the cytoplasm. It catalyses the reaction (S)-malate = fumarate + H2O. It participates in carbohydrate metabolism; tricarboxylic acid cycle; (S)-malate from fumarate: step 1/1. Involved in the TCA cycle. Catalyzes the stereospecific interconversion of fumarate to L-malate. This is Fumarate hydratase class II 1 from Pseudomonas aeruginosa (strain ATCC 15692 / DSM 22644 / CIP 104116 / JCM 14847 / LMG 12228 / 1C / PRS 101 / PAO1).